Reading from the N-terminus, the 203-residue chain is Small ribosomal subunit protein uS4 (203 aa).

The S4 RNA-binding domain maps to 93–156 (TRLDNLVFRL…QNLAIVNEAI (64 aa)).

It belongs to the universal ribosomal protein uS4 family. In terms of assembly, part of the 30S ribosomal subunit. Contacts protein S5. The interaction surface between S4 and S5 is involved in control of translational fidelity.

One of the primary rRNA binding proteins, it binds directly to 16S rRNA where it nucleates assembly of the body of the 30S subunit. Functionally, with S5 and S12 plays an important role in translational accuracy. The chain is Small ribosomal subunit protein uS4 from Lacticaseibacillus casei (strain BL23) (Lactobacillus casei).